A 351-amino-acid polypeptide reads, in one-letter code: Porphobilinogen deaminase (351 aa).

At cysteine 242 the chain carries S-(dipyrrolylmethanemethyl)cysteine. Positions 257–306 (PRHLSKLAYREVLEGNTEALATAAYKSNRTDASTGLTYKLPLEVEFGKVS) constitute an RPE1 insert domain.

The protein belongs to the HMBS family. In terms of assembly, monomer. The cofactor is dipyrromethane.

It catalyses the reaction 4 porphobilinogen + H2O = hydroxymethylbilane + 4 NH4(+). It participates in porphyrin-containing compound metabolism; protoporphyrin-IX biosynthesis; coproporphyrinogen-III from 5-aminolevulinate: step 2/4. Its function is as follows. Tetrapolymerization of the monopyrrole PBG into the hydroxymethylbilane pre-uroporphyrinogen in several discrete steps. The sequence is that of Porphobilinogen deaminase from Rickettsia conorii (strain ATCC VR-613 / Malish 7).